Consider the following 61-residue polypeptide: uncharacterized protein (61 aa).

Residues 34–61 adopt a coiled-coil conformation; that stretch reads TDVEDIDRLISMLDDLEAKYERFKKDWE.

This is an uncharacterized protein from Bacillus subtilis (strain 168).